We begin with the raw amino-acid sequence, 188 residues long: GTP-dependent dephospho-CoA kinase (188 aa).

5 residues coordinate GTP: D43, V44, D62, E121, and D144.

Belongs to the GTP-dependent DPCK family.

It carries out the reaction 3'-dephospho-CoA + GTP = GDP + CoA + H(+). Its pathway is cofactor biosynthesis; coenzyme A biosynthesis. In terms of biological role, catalyzes the GTP-dependent phosphorylation of the 3'-hydroxyl group of dephosphocoenzyme A to form coenzyme A (CoA). The polypeptide is GTP-dependent dephospho-CoA kinase (Methanococcoides burtonii (strain DSM 6242 / NBRC 107633 / OCM 468 / ACE-M)).